The primary structure comprises 235 residues: Small ribosomal subunit protein uS3 (235 aa).

In terms of domain architecture, KH type-2 spans 39–107 (VRQFLNKELA…PAQINIAEVK (69 aa)). The span at 215 to 226 (AQQPEQQPATPK) shows a compositional bias: low complexity. Positions 215–235 (AQQPEQQPATPKKAPRGKGRK) are disordered.

It belongs to the universal ribosomal protein uS3 family. As to quaternary structure, part of the 30S ribosomal subunit. Forms a tight complex with proteins S10 and S14.

Functionally, binds the lower part of the 30S subunit head. Binds mRNA in the 70S ribosome, positioning it for translation. The chain is Small ribosomal subunit protein uS3 from Histophilus somni (strain 129Pt) (Haemophilus somnus).